The chain runs to 824 residues: Glycogen phosphorylase (824 aa).

Position 667 is an N6-(pyridoxal phosphate)lysine (K667).

Belongs to the glycogen phosphorylase family. The cofactor is pyridoxal 5'-phosphate.

It carries out the reaction [(1-&gt;4)-alpha-D-glucosyl](n) + phosphate = [(1-&gt;4)-alpha-D-glucosyl](n-1) + alpha-D-glucose 1-phosphate. In terms of biological role, phosphorylase is an important allosteric enzyme in carbohydrate metabolism. Enzymes from different sources differ in their regulatory mechanisms and in their natural substrates. However, all known phosphorylases share catalytic and structural properties. This is Glycogen phosphorylase (glgP) from Chlamydia pneumoniae (Chlamydophila pneumoniae).